Reading from the N-terminus, the 425-residue chain is tRNA (guanine-N(7)-)-methyltransferase non-catalytic subunit wuho (425 aa).

The interval 67 to 102 (ATCAGKEPGGKEQQLTKQPEEGGTTASGSGVTSTSV) is disordered. The span at 88 to 102 (GGTTASGSGVTSTSV) shows a compositional bias: low complexity. 5 WD repeats span residues 97-138 (VTST…ARLL), 142-181 (PLAR…APPR), 185-224 (GHLS…DIHS), 228-266 (GHRE…ELLQ), and 325-365 (AGSW…PATS).

This sequence belongs to the WD repeat TRM82 family. In terms of assembly, forms a heterodimer with the catalytic subunit Mettl1. Interacts with mei-P26 and weakly interacts with bgcn; required for the function or formation of the mei-P26-bgcn-bam-sxl complex. Interacts with nanos; may be involved in mei-P26-dependent derepression of the BMP signaling pathway. Interacts with Myc; the interaction may be mediated by mei-P26 and may be involved in the regulation of ribosome biogenesis. As to expression, in testis, it is present at high level in hub cells, a niche for germline stem cells of testis. Ubiquitously expressed in all testicular cells throughout spermatogenesis. Ubiquitously expressed in all germline and somatic cells of the ovary.

It localises to the nucleus. The protein resides in the cytoplasm. Its pathway is tRNA modification; N(7)-methylguanine-tRNA biosynthesis. In terms of biological role, required for the Mettl1-dependent formation of N(7)-methylguanine at position 46 (m7G46) in tRNA. In the Mettl1-wuho methyltransferase complex, it is required to stabilize and induce conformational changes of the catalytic subunit. Required for binding of nanos mRNA and repression of translation by the mei-P26-bgcn-bam-sxl complex. May cooperate with mei-P26 and nanos to derepress the BMP signaling pathway. May cooperate with mei-P26 to suppress expression of a subset of microRNAs. May cooperate with mei-P26 to regulate bam expression levels in germline cells during gametogenesis. Required to promote mitosis to meiosis transition during gametogenesis. May regulate germline cell division in part by regulating ribosome biogenesis. The protein is tRNA (guanine-N(7)-)-methyltransferase non-catalytic subunit wuho of Drosophila yakuba (Fruit fly).